Consider the following 411-residue polypeptide: Arginine deiminase (411 aa).

The active-site Amidino-cysteine intermediate is the Cys-401.

This sequence belongs to the arginine deiminase family.

The protein resides in the cytoplasm. The enzyme catalyses L-arginine + H2O = L-citrulline + NH4(+). The protein operates within amino-acid degradation; L-arginine degradation via ADI pathway; carbamoyl phosphate from L-arginine: step 1/2. The chain is Arginine deiminase from Staphylococcus aureus (strain bovine RF122 / ET3-1).